Here is a 152-residue protein sequence, read N- to C-terminus: D-aminoacyl-tRNA deacylase (152 aa).

Positions 142-143 (GP) match the Gly-cisPro motif, important for rejection of L-amino acids motif.

This sequence belongs to the DTD family. Homodimer.

It localises to the cytoplasm. It carries out the reaction glycyl-tRNA(Ala) + H2O = tRNA(Ala) + glycine + H(+). It catalyses the reaction a D-aminoacyl-tRNA + H2O = a tRNA + a D-alpha-amino acid + H(+). In terms of biological role, an aminoacyl-tRNA editing enzyme that deacylates mischarged D-aminoacyl-tRNAs. Also deacylates mischarged glycyl-tRNA(Ala), protecting cells against glycine mischarging by AlaRS. Acts via tRNA-based rather than protein-based catalysis; rejects L-amino acids rather than detecting D-amino acids in the active site. By recycling D-aminoacyl-tRNA to D-amino acids and free tRNA molecules, this enzyme counteracts the toxicity associated with the formation of D-aminoacyl-tRNA entities in vivo and helps enforce protein L-homochirality. The polypeptide is D-aminoacyl-tRNA deacylase (Burkholderia multivorans (strain ATCC 17616 / 249)).